A 920-amino-acid polypeptide reads, in one-letter code: Isoleucine--tRNA ligase (920 aa).

Positions 58 to 68 match the 'HIGH' region motif; sequence PYANGHLHLGH. E569 is an L-isoleucyl-5'-AMP binding site. The short motif at 610 to 614 is the 'KMSKS' region element; sequence KMSKS. Residue K613 coordinates ATP. Residues C895, C898, C910, and C913 each coordinate Zn(2+).

This sequence belongs to the class-I aminoacyl-tRNA synthetase family. IleS type 1 subfamily. As to quaternary structure, monomer. It depends on Zn(2+) as a cofactor.

The protein resides in the cytoplasm. It catalyses the reaction tRNA(Ile) + L-isoleucine + ATP = L-isoleucyl-tRNA(Ile) + AMP + diphosphate. Functionally, catalyzes the attachment of isoleucine to tRNA(Ile). As IleRS can inadvertently accommodate and process structurally similar amino acids such as valine, to avoid such errors it has two additional distinct tRNA(Ile)-dependent editing activities. One activity is designated as 'pretransfer' editing and involves the hydrolysis of activated Val-AMP. The other activity is designated 'posttransfer' editing and involves deacylation of mischarged Val-tRNA(Ile). The polypeptide is Isoleucine--tRNA ligase (Helicobacter pylori (strain G27)).